The following is a 350-amino-acid chain: 3-dehydroquinate synthase (350 aa).

NAD(+)-binding positions include 106–110, 130–131, K143, and K152; these read GVIGD and TS. Residues E185, H246, and H263 each coordinate Zn(2+).

This sequence belongs to the sugar phosphate cyclases superfamily. Dehydroquinate synthase family. Co(2+) serves as cofactor. The cofactor is Zn(2+). It depends on NAD(+) as a cofactor.

Its subcellular location is the cytoplasm. The catalysed reaction is 7-phospho-2-dehydro-3-deoxy-D-arabino-heptonate = 3-dehydroquinate + phosphate. It participates in metabolic intermediate biosynthesis; chorismate biosynthesis; chorismate from D-erythrose 4-phosphate and phosphoenolpyruvate: step 2/7. In terms of biological role, catalyzes the conversion of 3-deoxy-D-arabino-heptulosonate 7-phosphate (DAHP) to dehydroquinate (DHQ). The polypeptide is 3-dehydroquinate synthase (Clostridium beijerinckii (strain ATCC 51743 / NCIMB 8052) (Clostridium acetobutylicum)).